Consider the following 610-residue polypeptide: Zinc metalloproteinase-disintegrin-like acurhagin (610 aa).

The first 20 residues, 1-20 (MIQVLLVTICLAAFPYQGSS), serve as a signal peptide directing secretion. A propeptide spanning residues 21–191 (IILESGDVND…ISQLNLIPEQ (171 aa)) is cleaved from the precursor. Pyrrolidone carboxylic acid is present on Q192. The region spanning 198–394 (KYVETVVVVD…HNPECIDNEP (197 aa)) is the Peptidase M12B domain. Residues E201 and D285 each contribute to the Ca(2+) site. Intrachain disulfides connect C309/C389, C349/C373, and C351/C356. H334 provides a ligand contact to Zn(2+). E335 is a catalytic residue. Positions 338 and 344 each coordinate Zn(2+). N-linked (GlcNAc...) asparagine glycosylation occurs at N372. The Ca(2+) site is built by C389, N392, N407, L409, E411, E414, and D417. The region spanning 402-488 (PPLCGNELLE…ECPADVFHKN (87 aa)) is the Disintegrin domain. Cystine bridges form between C405–C434, C416–C429, C418–C424, C428–C451, C442–C448, C447–C473, C460–C480, C467–C499, C492–C504, C511–C561, C526–C572, C539–C549, C556–C598, and C592–C603. The D/ECD-tripeptide motif lies at 466–468 (ECD). Residues D468, P469, E471, D483, and V484 each coordinate Ca(2+).

It belongs to the venom metalloproteinase (M12B) family. P-III subfamily. P-IIIa sub-subfamily. In terms of assembly, monomer. Requires Zn(2+) as cofactor. Post-translationally, N-glycosylated. Expressed by the venom gland.

It localises to the secreted. The proteinase activity is slightly enhanced by Ca(2+) and Mg(2+), but is completely inhibited by Zn(2+). Is completely inhibited by phenanthroline and EDTA. Not inhibited by PMSF. In terms of biological role, snake venom zinc metalloprotease that causes hemorrhage and dose-dependently inhibits platelet aggregation triggered by collagen. This inhibition is due to its binding to glycoprotein VI (GP6) and collagen. The binding to GP6 results in inhibition of the signaling pathway (decrease of tyrosine phosphorylation of signaling proteins such as Syk, LAT, PI3-K and PLCgamma2). Preferentially cleaves alpha chain (FGA) of fibrinogen, followed by beta chain (FGB). Also degrades the extracellular matrix protein fibronectin (FN1), and cleaves collagen and von Willebrand factor (VWF). This Deinagkistrodon acutus (Hundred-pace snake) protein is Zinc metalloproteinase-disintegrin-like acurhagin.